The sequence spans 897 residues: MSLDFKKTLNMPSTKFDMKANLVEKEPLFRKKWLEDDIYQKVLKNNANNERFVVHDGPPYANGDIHVGHALNKILKDIIVRYKSLQGYYSPFVPGWDTHGLPIEHKMLTESKLDRDQITVELLRKKSRNYALKQIEHQKKQFQKLQLFSDFSKIYITLDKSYEAKQLKVFKKLALDGLVYKGLKPIYWSPSSQSALAEAEVEYETVTTNSIYVSFDVTKSTFNKVPVGSKLVVWTTTPWTLIANAAVAISFDITYLTVKYQDSLYVVAKNLFYNDLLEKFQWENYEVVDEFLGKEMPRNSIWYKAPLLDFDAPVIATNYVLEDSGTGLVHSAPLFGEDDFSLTFDNDLKLIMHISDTGHIENSQTKYDSLFYEEANKEIIKDLAEKVVHVYTYSHSYPHDWRTKKPIIYRATPQWFVSIDKVRSKIVSELQNKVKTFPEWSKNRMISMIENRGDWTISRQRTWGVPIIIFYDENEKPVINEEIFDHVIDLVANHGTDIWFSSTVDELLPEKYRNRNWTKENDIMDVWFDSGVSSIAVDIDGGKTTLPFDVYLEGNDQFRGWFNSSVINAVAYAGVSPYINLVSHGFALDGQGKKMSKSRNNVVDPLDVIKKYGADILRLWVANSEYSSDVHISESILVQNSEIYRKIRNTVKFLLGNLNNFKYDKDLKLTSIHHYINEELKSVKKEVLENYDKFRFINVIKVLNRYVIDLSSFYFSVTKDILYIRKENDEERQMVLKNFYEILDFLMLALAPIIPTTADEMYSYFNKENKKESLFLERLEKAGDVSFDEKVLEQFKEFFELRDQVNILIENQIQNKVIKRSNELELVLPETASEFLKSLDLKTLLMVSKISYGKTLQVVKFESEKCKRCWNHFASLNKEYEICDLCFSVLKDTLANA.

The short motif at 59–69 (PYANGDIHVGH) is the 'HIGH' region element. Glu553 contributes to the L-isoleucyl-5'-AMP binding site. Positions 594-598 (KMSKS) match the 'KMSKS' region motif. An ATP-binding site is contributed by Lys597. Zn(2+)-binding residues include Cys866, Cys869, Cys883, and Cys886.

Belongs to the class-I aminoacyl-tRNA synthetase family. IleS type 1 subfamily. In terms of assembly, monomer. Zn(2+) serves as cofactor.

It is found in the cytoplasm. The enzyme catalyses tRNA(Ile) + L-isoleucine + ATP = L-isoleucyl-tRNA(Ile) + AMP + diphosphate. Catalyzes the attachment of isoleucine to tRNA(Ile). As IleRS can inadvertently accommodate and process structurally similar amino acids such as valine, to avoid such errors it has two additional distinct tRNA(Ile)-dependent editing activities. One activity is designated as 'pretransfer' editing and involves the hydrolysis of activated Val-AMP. The other activity is designated 'posttransfer' editing and involves deacylation of mischarged Val-tRNA(Ile). The sequence is that of Isoleucine--tRNA ligase from Mycoplasmopsis synoviae (strain 53) (Mycoplasma synoviae).